The chain runs to 282 residues: HTH-type transcriptional activator RhaR (282 aa).

The HTH araC/xylS-type domain maps to 179-277 (DKLITRLAAS…GMTPSQWRHL (99 aa)). 2 consecutive DNA-binding regions (H-T-H motif) follow at residues 196–217 (DKFCDEASCSERVLRQQFRQQT) and 244–267 (ISDISTECGFEDSNYFSVVFTRET).

In terms of assembly, binds DNA as a dimer.

It is found in the cytoplasm. Activates expression of the rhaSR operon in response to L-rhamnose. The protein is HTH-type transcriptional activator RhaR of Shigella flexneri serotype 5b (strain 8401).